The following is a 481-amino-acid chain: Phototropic-responsive NPH3 family protein NPY4 (481 aa).

Positions 29-102 (TEIIIIIGNV…CYGITVTLNA (74 aa)) constitute a BTB domain. One can recognise an NPH3 domain in the interval 207 to 450 (DWWVEDLCEL…VQVLFFEQIR (244 aa)). Y391 carries the post-translational modification Phosphotyrosine. Residues 456 to 481 (TGYSTPELTTTTLNTEDDEWDHEKEF) are disordered. A compositionally biased stretch (low complexity) spans 460-469 (TPELTTTTLN).

It belongs to the NPH3 family. In terms of tissue distribution, expressed in the hypocotyl cells that would differentiate into vascular bundles. Highly expressed in primary root tips and radicles.

It is found in the cell membrane. The protein resides in the cytoplasm. Its subcellular location is the cytosol. Its pathway is protein modification; protein ubiquitination. In terms of biological role, may act as a substrate-specific adapter of an E3 ubiquitin-protein ligase complex (CUL3-RBX1-BTB) which mediates the ubiquitination and subsequent proteasomal degradation of target proteins. Plays an essential role in auxin-mediated organogenesis and in root gravitropic responses through the control of PIN proteins (e.g. PIN1 and PIN2) polarity in the root tip endodermal cell layer and in shoot epidermis. Recruited to the plasma membrane by PINs (e.g. PIN1 and PIN2) and, in concert with AGC kinases-mediated (e.g. D6PK and PID) PINs phosphorylation, maintains their polarity through limiting lateral diffusion-based escape. The sequence is that of Phototropic-responsive NPH3 family protein NPY4 from Arabidopsis thaliana (Mouse-ear cress).